Consider the following 730-residue polypeptide: Ribosomal RNA large subunit methyltransferase K/L (730 aa).

In terms of domain architecture, THUMP spans threonine 46–leucine 157. Residues alanine 399–arginine 408 are compositionally biased toward basic and acidic residues. Positions alanine 399 to arginine 418 are disordered.

This sequence belongs to the methyltransferase superfamily. RlmKL family.

It is found in the cytoplasm. The catalysed reaction is guanosine(2445) in 23S rRNA + S-adenosyl-L-methionine = N(2)-methylguanosine(2445) in 23S rRNA + S-adenosyl-L-homocysteine + H(+). It carries out the reaction guanosine(2069) in 23S rRNA + S-adenosyl-L-methionine = N(2)-methylguanosine(2069) in 23S rRNA + S-adenosyl-L-homocysteine + H(+). Its function is as follows. Specifically methylates the guanine in position 2445 (m2G2445) and the guanine in position 2069 (m7G2069) of 23S rRNA. This is Ribosomal RNA large subunit methyltransferase K/L from Pseudomonas entomophila (strain L48).